Reading from the N-terminus, the 193-residue chain is Superoxide dismutase [Fe] (193 aa).

4 residues coordinate Fe cation: His-27, His-74, Asp-157, and His-161.

This sequence belongs to the iron/manganese superoxide dismutase family. In terms of assembly, homodimer. The cofactor is Fe cation.

The enzyme catalyses 2 superoxide + 2 H(+) = H2O2 + O2. Destroys superoxide anion radicals which are normally produced within the cells and which are toxic to biological systems. The chain is Superoxide dismutase [Fe] (sodB) from Salmonella typhimurium (strain LT2 / SGSC1412 / ATCC 700720).